The primary structure comprises 128 residues: Large ribosomal subunit protein bL12 (128 aa).

Belongs to the bacterial ribosomal protein bL12 family. As to quaternary structure, homodimer. Part of the ribosomal stalk of the 50S ribosomal subunit. Forms a multimeric L10(L12)X complex, where L10 forms an elongated spine to which 2 to 4 L12 dimers bind in a sequential fashion. Binds GTP-bound translation factors.

Its function is as follows. Forms part of the ribosomal stalk which helps the ribosome interact with GTP-bound translation factors. Is thus essential for accurate translation. This is Large ribosomal subunit protein bL12 from Thermotoga petrophila (strain ATCC BAA-488 / DSM 13995 / JCM 10881 / RKU-1).